Reading from the N-terminus, the 119-residue chain is Phosphoribosyl-AMP cyclohydrolase (119 aa).

Residue Asp-72 participates in Mg(2+) binding. Cys-73 contacts Zn(2+). Residues Asp-74 and Asp-76 each contribute to the Mg(2+) site. The Zn(2+) site is built by Cys-89 and Cys-96.

Belongs to the PRA-CH family. Homodimer. It depends on Mg(2+) as a cofactor. Zn(2+) serves as cofactor.

It localises to the cytoplasm. It carries out the reaction 1-(5-phospho-beta-D-ribosyl)-5'-AMP + H2O = 1-(5-phospho-beta-D-ribosyl)-5-[(5-phospho-beta-D-ribosylamino)methylideneamino]imidazole-4-carboxamide. It participates in amino-acid biosynthesis; L-histidine biosynthesis; L-histidine from 5-phospho-alpha-D-ribose 1-diphosphate: step 3/9. Catalyzes the hydrolysis of the adenine ring of phosphoribosyl-AMP. The protein is Phosphoribosyl-AMP cyclohydrolase of Methanocella arvoryzae (strain DSM 22066 / NBRC 105507 / MRE50).